The primary structure comprises 65 residues: DNA gyrase inhibitor YacG (65 aa).

Zn(2+)-binding residues include Cys10, Cys13, Cys29, and Cys33. The interval 45–65 (EKAIPGAPDMSDSDGWSEDQY) is disordered. The segment covering 55–65 (SDSDGWSEDQY) has biased composition (acidic residues).

This sequence belongs to the DNA gyrase inhibitor YacG family. In terms of assembly, interacts with GyrB. It depends on Zn(2+) as a cofactor.

Its function is as follows. Inhibits all the catalytic activities of DNA gyrase by preventing its interaction with DNA. Acts by binding directly to the C-terminal domain of GyrB, which probably disrupts DNA binding by the gyrase. The protein is DNA gyrase inhibitor YacG of Vibrio cholerae serotype O1 (strain ATCC 39315 / El Tor Inaba N16961).